We begin with the raw amino-acid sequence, 259 residues long: UPF0246 protein SG0407 (259 aa).

The protein belongs to the UPF0246 family.

This chain is UPF0246 protein SG0407, found in Sodalis glossinidius (strain morsitans).